A 144-amino-acid chain; its full sequence is Large ribosomal subunit protein uL15 (144 aa).

The disordered stretch occupies residues 1 to 54; the sequence is MRLNTLSPAAGAKHAPKRVGRGMGSGLGKTAGRGHKGQKSRSGGGVRPGFEGGQ. Composition is skewed to gly residues over residues 21–31 and 42–52; these read RGMGSGLGKTA and SGGGVRPGFEG.

It belongs to the universal ribosomal protein uL15 family. As to quaternary structure, part of the 50S ribosomal subunit.

Its function is as follows. Binds to the 23S rRNA. The sequence is that of Large ribosomal subunit protein uL15 from Shewanella oneidensis (strain ATCC 700550 / JCM 31522 / CIP 106686 / LMG 19005 / NCIMB 14063 / MR-1).